We begin with the raw amino-acid sequence, 323 residues long: Sphingolipid delta(4)-desaturase/C4-monooxygenase DES2 (323 aa).

Gly2 carries N-myristoyl glycine lipidation. Transmembrane regions (helical) follow at residues 45–65 and 68–88; these read WAVL…RGLA and WLLF…TLAI. The Histidine box-1 signature appears at 89–93; the sequence is HDISH. The segment at 95–99 is required for C4-hydroxylase activity; that stretch reads AAFGT. A Histidine box-2 motif is present at residues 128 to 132; that stretch reads HVDHH. Residues 210–231 traverse the membrane as a helical segment; the sequence is VYLLASSFLGLGLHPISGHFVA. Positions 259-263 match the Histidine box-3 motif; the sequence is HVEHH.

The protein belongs to the fatty acid desaturase type 1 family. DEGS subfamily. In terms of tissue distribution, highly expressed in skin, intestine and kidney.

It is found in the endoplasmic reticulum membrane. The enzyme catalyses a dihydroceramide + 2 Fe(II)-[cytochrome b5] + O2 + 2 H(+) = a phytoceramide + 2 Fe(III)-[cytochrome b5] + H2O. It carries out the reaction an N-acylsphinganine + 2 Fe(II)-[cytochrome b5] + O2 + 2 H(+) = an N-acylsphing-4-enine + 2 Fe(III)-[cytochrome b5] + 2 H2O. It catalyses the reaction N-octanoylsphinganine + 2 Fe(II)-[cytochrome b5] + O2 + 2 H(+) = N-octanoyl-4-hydroxysphinganine + 2 Fe(III)-[cytochrome b5] + H2O. The catalysed reaction is an N-acylsphinganine + 2 Fe(II)-[cytochrome b5] + O2 + 2 H(+) = an N-acyl-(4R)-4-hydroxysphinganine + 2 Fe(III)-[cytochrome b5] + H2O. Its pathway is membrane lipid metabolism; sphingolipid biosynthesis. Its function is as follows. Bifunctional enzyme which acts both as a sphingolipid delta(4)-desaturase and a sphingolipid C4-monooxygenase. The protein is Sphingolipid delta(4)-desaturase/C4-monooxygenase DES2 of Homo sapiens (Human).